Reading from the N-terminus, the 538-residue chain is Phosphoenolpyruvate carboxykinase (ATP) (538 aa).

Residue Arg64 coordinates substrate. Arg152 contributes to the ATP binding site. Tyr205 and Lys211 together coordinate substrate. ATP contacts are provided by residues Lys211, His230, and 246 to 254 (GLSGTGKTT). The Mn(2+) site is built by Lys211 and His230. A Mn(2+)-binding site is contributed by Asp267. ATP is bound by residues Glu295, Arg331, Arg344, 447-448 (RI), and Thr453. Arg331 is a binding site for substrate.

Belongs to the phosphoenolpyruvate carboxykinase (ATP) family. In terms of assembly, monomer. Mn(2+) is required as a cofactor.

The protein resides in the cytoplasm. It carries out the reaction oxaloacetate + ATP = phosphoenolpyruvate + ADP + CO2. It participates in carbohydrate biosynthesis; gluconeogenesis. In terms of biological role, involved in gluconeogenesis. Catalyzes the conversion of oxaloacetate (OAA) to phosphoenolpyruvate (PEP) through direct phosphoryl transfer between the nucleoside triphosphate and OAA. This Actinobacillus succinogenes (strain ATCC 55618 / DSM 22257 / CCUG 43843 / 130Z) protein is Phosphoenolpyruvate carboxykinase (ATP).